We begin with the raw amino-acid sequence, 731 residues long: SUN domain-containing protein 2 (731 aa).

2 disordered regions span residues 1–69 (MSRR…SHTS) and 106–142 (SGDL…FGSS). The tract at residues 1–128 (MSRRSQRLTR…GSESSKANGL (128 aa)) is LMNA-binding. The Nuclear portion of the chain corresponds to 1–226 (MSRRSQRLTR…SRHFSLNLKS (226 aa)). Serine 12 is modified (phosphoserine). A compositionally biased stretch (low complexity) spans 18–33 (GGSSSSGASSVAGSQG). Phosphoserine occurs at positions 39 and 55. The residue at position 117 (threonine 117) is a Phosphothreonine. 3 positions are modified to phosphoserine: serine 120, serine 123, and serine 147. The chain crosses the membrane as a helical span at residues 227–247 (FLWFLLLLLLLTGLTYGAWHF). Topologically, residues 248 to 731 (YPLGLQTLQP…RFRVHGEPAH (484 aa)) are perinuclear space. Coiled-coil stretches lie at residues 396–452 (QESE…VADE) and 486–519 (RSGL…KSAR). The interval 521 to 731 (AAASLGQILQ…RFRVHGEPAH (211 aa)) is sufficient for interaction with SYNE1 and SYNE2. One can recognise an SUN domain in the interval 569 to 730 (GASVISTRCS…YRFRVHGEPA (162 aa)). Residue asparagine 650 is glycosylated (N-linked (GlcNAc...) asparagine).

In terms of assembly, core component of the LINC complex which is composed of inner nuclear membrane SUN domain-containing proteins coupled to outer nuclear membrane KASH domain-containing nesprins. SUN and KASH domain-containing proteins seem to bind each other promiscuously; however, differentially expression of LINC complex constituents is giving rise to specific assemblies. At least SUN1/2-containing core LINC complexes are proposed to be hexameric composed of three protomers of each KASH and SUN domain-containing protein. Interacts with SYNE2; the SUN2:SYNE2/KASH2 LINC complex is a heterohexamer; the homotrimeric cloverleave-like conformation of the SUN domain is a prerequisite for LINC complex formation in which three separate SYNE2/KASH2 peptides bind at the interface of adjacent SUN domains. Component of a probable SUN2:KASH5 LINC complex. Interacts with SYNE1 and SYNE3; probably forming respective LINC complexes. Interacts with A-type lamin. Interaction with lamins B1 and C is hardly detectable. Interacts with EMD. Interacts with RAB5A. Interacts with TMEM43 and TMEM201. Interacts with IRAG2. In terms of processing, the disulfide bond with SYNE2 is required for stability of the SUN2:SYNE2/KASH2 LINC complex under tensile forces though not required for the interaction. The disulfide bond is proposed to be conserved in LINC complexes involved in force transmission. As to expression, highly expressed in heart, placenta and muscle.

The protein resides in the nucleus inner membrane. It localises to the nucleus envelope. The protein localises to the endosome membrane. As a component of the LINC (LInker of Nucleoskeleton and Cytoskeleton) complex, involved in the connection between the nuclear lamina and the cytoskeleton. The nucleocytoplasmic interactions established by the LINC complex play an important role in the transmission of mechanical forces across the nuclear envelope and in nuclear movement and positioning. Specifically, SYNE2 and SUN2 assemble in arrays of transmembrane actin-associated nuclear (TAN) lines which are bound to F-actin cables and couple the nucleus to retrograde actin flow during actin-dependent nuclear movement. Required for interkinetic nuclear migration (INM) and essential for nucleokinesis and centrosome-nucleus coupling during radial neuronal migration in the cerebral cortex and during glial migration. Required for nuclear migration in retinal photoreceptor progenitors implicating association with cytoplasmic dynein-dynactin and kinesin motor complexes, and probably B-type lamins; SUN1 and SUN2 seem to act redundantly. The SUN1/2:KASH5 LINC complex couples telomeres to microtubules during meiosis; SUN1 and SUN2 seem to act at least partial redundantly. Anchors chromosome movement in the prophase of meiosis and is involved in selective gene expression of coding and non-coding RNAs needed for gametogenesis. Required for telomere attachment to nuclear envelope and gametogenesis. May also function on endocytic vesicles as a receptor for Rab5-GDP and participate in the activation of Rab5. This chain is SUN domain-containing protein 2, found in Mus musculus (Mouse).